We begin with the raw amino-acid sequence, 221 residues long: Histidine biosynthesis bifunctional protein HisIE (221 aa).

The tract at residues 1-129 (MAYSKNFSIE…AKKTSPFSNI (129 aa)) is phosphoribosyl-AMP cyclohydrolase. The phosphoribosyl-ATP pyrophosphohydrolase stretch occupies residues 130-221 (CSELFDTLHE…VLESRRGKNN (92 aa)).

The protein in the N-terminal section; belongs to the PRA-CH family. In the C-terminal section; belongs to the PRA-PH family.

Its subcellular location is the cytoplasm. The catalysed reaction is 1-(5-phospho-beta-D-ribosyl)-ATP + H2O = 1-(5-phospho-beta-D-ribosyl)-5'-AMP + diphosphate + H(+). It catalyses the reaction 1-(5-phospho-beta-D-ribosyl)-5'-AMP + H2O = 1-(5-phospho-beta-D-ribosyl)-5-[(5-phospho-beta-D-ribosylamino)methylideneamino]imidazole-4-carboxamide. It functions in the pathway amino-acid biosynthesis; L-histidine biosynthesis; L-histidine from 5-phospho-alpha-D-ribose 1-diphosphate: step 2/9. Its pathway is amino-acid biosynthesis; L-histidine biosynthesis; L-histidine from 5-phospho-alpha-D-ribose 1-diphosphate: step 3/9. This Prochlorococcus marinus subsp. pastoris (strain CCMP1986 / NIES-2087 / MED4) protein is Histidine biosynthesis bifunctional protein HisIE.